Reading from the N-terminus, the 199-residue chain is Holliday junction branch migration complex subunit RuvA (199 aa).

The segment at methionine 1–glycine 64 is domain I. Residues threonine 65–methionine 143 are domain II. The segment at threonine 144–valine 151 is flexible linker. The tract at residues threonine 152–leucine 199 is domain III.

The protein belongs to the RuvA family. In terms of assembly, homotetramer. Forms an RuvA(8)-RuvB(12)-Holliday junction (HJ) complex. HJ DNA is sandwiched between 2 RuvA tetramers; dsDNA enters through RuvA and exits via RuvB. An RuvB hexamer assembles on each DNA strand where it exits the tetramer. Each RuvB hexamer is contacted by two RuvA subunits (via domain III) on 2 adjacent RuvB subunits; this complex drives branch migration. In the full resolvosome a probable DNA-RuvA(4)-RuvB(12)-RuvC(2) complex forms which resolves the HJ.

It is found in the cytoplasm. The RuvA-RuvB-RuvC complex processes Holliday junction (HJ) DNA during genetic recombination and DNA repair, while the RuvA-RuvB complex plays an important role in the rescue of blocked DNA replication forks via replication fork reversal (RFR). RuvA specifically binds to HJ cruciform DNA, conferring on it an open structure. The RuvB hexamer acts as an ATP-dependent pump, pulling dsDNA into and through the RuvAB complex. HJ branch migration allows RuvC to scan DNA until it finds its consensus sequence, where it cleaves and resolves the cruciform DNA. The sequence is that of Holliday junction branch migration complex subunit RuvA from Ruminiclostridium cellulolyticum (strain ATCC 35319 / DSM 5812 / JCM 6584 / H10) (Clostridium cellulolyticum).